Consider the following 493-residue polypeptide: Leucine-rich repeat-containing protein 14 (493 aa).

The stretch at 111–146 (KHALRVLDMTGLLDDGVEQDPETMSMWDCTAAVART) is one LRR 1; degenerate repeat. The LRR 2; degenerate repeat unit spans residues 194–218 (RLCCRDLRAEDLPMRNTVALLQLLD). The LRR 3; degenerate repeat unit spans residues 219 to 246 (AGCLRRIDLRFNNLGLRGLSVIIPHVAR). Residues 247–282 (FQHLASLRLHYVHGDSRQPSVDGEDNFRYFLAQMGR) form an LRR 4; degenerate repeat. LRR repeat units lie at residues 283 to 307 (FMCL…LSTL), 308 to 339 (QRPL…AHLK), 340 to 360 (KLDL…QGLL), 364 to 391 (ATTL…TLTR), and 392 to 416 (CASL…LLRD).

This sequence belongs to the PRAME family. LRRC14 subfamily. As to quaternary structure, interacts with IKBKB; disrupts IKBKB-IKBKG interaction preventing I-kappa-B-kinase (IKK) core complex formation and leading to a decrease of IKBKB phosphorylation and NF-kappaB activation. Interacts with CHUK.

The protein localises to the cytoplasm. Functionally, negatively regulates Toll-like receptor-mediated NF-kappa-B signaling by disrupting IKK core complex formation through interaction with IKBKB. This chain is Leucine-rich repeat-containing protein 14, found in Mus musculus (Mouse).